The sequence spans 546 residues: Cytochrome P450 monooxygenase alnH (546 aa).

A helical transmembrane segment spans residues 11–31 (VPYSVPLLGSTVVILIGFIAI). N-linked (GlcNAc...) asparagine glycosylation is found at N146, N258, and N425. Residue C445 participates in heme binding.

It belongs to the cytochrome P450 family. Heme is required as a cofactor.

The protein localises to the membrane. Its pathway is polyketide biosynthesis. Functionally, cytochrome P450 monooxygenase; part of the gene cluster that mediates the biosynthesis of asperlin, a polyketide showing anti-inflammatory, antitumor and antibiotic activities. The first step of the asperlin biosynthesis is the production of the intermediate 2,4,6-octatrienoic acid by the highly redusing polyketide synthase alnA with cleavage of the PKS product by the esterase alnB. 2,4,6-octatrienoic acid is further converted to asperlin via several steps involving the remaining enzymes from the cluster. The chain is Cytochrome P450 monooxygenase alnH from Emericella nidulans (strain FGSC A4 / ATCC 38163 / CBS 112.46 / NRRL 194 / M139) (Aspergillus nidulans).